The primary structure comprises 491 residues: MALEFTLNHVAPAAAVDCLVVGAYADHTLTPAAQALDAASGGRLTSLAQRGDLSGKTGATTLLHDLPGVSAPRVLVVGLGDAARFGVPQYLKAVGDAVRALKAGATRSALFTLSEVAIKDRDAAWAIRQAVIAADHAAYRYTATLGKKKTDDAGLAQLAIAGDDALALAQGQAIAAGVEFARELGNLPPNYCTPAYLAEVGVKFAGEHDGAEAEILDEHQMEALGMGSLLAVARGSANRPRLVVLKWTGGGDAKPYVLVGKGITFDTGGVNLKTQGGIEEMKYDMCGGANVIGTFVAAVKAKLPLNLVVVVPAVENAIDGNAYRPSDVITSMSGKTIEVGNTDAEGRLILCDALTYAQRFEPAALVDVATLTGACMVALGHQTAGLMSKHDDLANELLAAGEHVFDRAWRLPLWDEYQPMLDSTFADVYNIGGRWAGAITAGCFLSRFTEGQRWAHLDIAGVASDEGKRGMATGRPVGLLSQWLLDQAARA.

Positions 261 and 266 each coordinate Mn(2+). Lysine 273 is a catalytic residue. Positions 284, 343, and 345 each coordinate Mn(2+). Residue arginine 347 is part of the active site.

Belongs to the peptidase M17 family. Mn(2+) serves as cofactor.

The protein localises to the cytoplasm. It catalyses the reaction Release of an N-terminal amino acid, Xaa-|-Yaa-, in which Xaa is preferably Leu, but may be other amino acids including Pro although not Arg or Lys, and Yaa may be Pro. Amino acid amides and methyl esters are also readily hydrolyzed, but rates on arylamides are exceedingly low.. The enzyme catalyses Release of an N-terminal amino acid, preferentially leucine, but not glutamic or aspartic acids.. In terms of biological role, presumably involved in the processing and regular turnover of intracellular proteins. Catalyzes the removal of unsubstituted N-terminal amino acids from various peptides. The protein is Probable cytosol aminopeptidase of Stenotrophomonas maltophilia (strain K279a).